We begin with the raw amino-acid sequence, 64 residues long: Large ribosomal subunit protein bL33 (64 aa).

Composition is skewed to basic and acidic residues over residues glutamate 16 to arginine 25 and threonine 33 to threonine 42. Residues glutamate 16–threonine 42 form a disordered region.

The protein belongs to the bacterial ribosomal protein bL33 family.

This is Large ribosomal subunit protein bL33 from Prochlorococcus marinus (strain MIT 9301).